Reading from the N-terminus, the 1611-residue chain is Pentafunctional AROM polypeptide (1611 aa).

The tract at residues 1 to 391 (MSSSSADVLK…YEEKASVVAD (391 aa)) is 3-dehydroquinate synthase. NAD(+) contacts are provided by residues 47-49 (DTN), 84-87 (EGAK), 115-117 (GGV), and Asp120. Position 131 (Arg131) interacts with 7-phospho-2-dehydro-3-deoxy-D-arabino-heptonate. 140-141 (TT) contacts NAD(+). Asp147 and Lys153 together coordinate 7-phospho-2-dehydro-3-deoxy-D-arabino-heptonate. Lys162 contacts NAD(+). Asn163 is a 7-phospho-2-dehydro-3-deoxy-D-arabino-heptonate binding site. Residues 180–183 (FLTT) and Asn191 contribute to the NAD(+) site. Residue Glu195 participates in Zn(2+) binding. Residues 195-198 (EVIK) and Lys257 each bind 7-phospho-2-dehydro-3-deoxy-D-arabino-heptonate. Residue Glu267 is the Proton acceptor; for 3-dehydroquinate synthase activity of the active site. 7-phospho-2-dehydro-3-deoxy-D-arabino-heptonate-binding positions include 271–275 (RNLVN) and His278. His278 provides a ligand contact to Zn(2+). His282 serves as the catalytic Proton acceptor; for 3-dehydroquinate synthase activity. Positions 294 and 363 each coordinate 7-phospho-2-dehydro-3-deoxy-D-arabino-heptonate. Zn(2+) is bound at residue His294. The EPSP synthase stretch occupies residues 404–863 (VKAATPTKSP…WDDLQNKIGV (460 aa)). Cys845 serves as the catalytic For EPSP synthase activity. Positions 892–1093 (DRPIFLIGMR…SVGNPTSFLS (202 aa)) are shikimate kinase. Position 899-906 (899-906 (GMRGAGKT)) interacts with ATP. The segment at 1094–1318 (LTFPDVTPAL…AAPGQLTARE (225 aa)) is 3-dehydroquinase. The Proton acceptor; for 3-dehydroquinate dehydratase activity role is filled by His1220. The active-site Schiff-base intermediate with substrate; for 3-dehydroquinate dehydratase activity is the Lys1248. The tract at residues 1331-1611 (AKKFVLFGSP…RKAVLDKYFA (281 aa)) is shikimate dehydrogenase.

This sequence in the N-terminal section; belongs to the sugar phosphate cyclases superfamily. Dehydroquinate synthase family. In the 2nd section; belongs to the EPSP synthase family. The protein in the 3rd section; belongs to the shikimate kinase family. It in the 4th section; belongs to the type-I 3-dehydroquinase family. This sequence in the C-terminal section; belongs to the shikimate dehydrogenase family. Homodimer. Zn(2+) serves as cofactor.

The protein localises to the cytoplasm. It carries out the reaction 7-phospho-2-dehydro-3-deoxy-D-arabino-heptonate = 3-dehydroquinate + phosphate. The catalysed reaction is 3-dehydroquinate = 3-dehydroshikimate + H2O. It catalyses the reaction shikimate + NADP(+) = 3-dehydroshikimate + NADPH + H(+). The enzyme catalyses shikimate + ATP = 3-phosphoshikimate + ADP + H(+). It carries out the reaction 3-phosphoshikimate + phosphoenolpyruvate = 5-O-(1-carboxyvinyl)-3-phosphoshikimate + phosphate. Its pathway is metabolic intermediate biosynthesis; chorismate biosynthesis; chorismate from D-erythrose 4-phosphate and phosphoenolpyruvate: step 2/7. It participates in metabolic intermediate biosynthesis; chorismate biosynthesis; chorismate from D-erythrose 4-phosphate and phosphoenolpyruvate: step 3/7. It functions in the pathway metabolic intermediate biosynthesis; chorismate biosynthesis; chorismate from D-erythrose 4-phosphate and phosphoenolpyruvate: step 4/7. The protein operates within metabolic intermediate biosynthesis; chorismate biosynthesis; chorismate from D-erythrose 4-phosphate and phosphoenolpyruvate: step 5/7. Its pathway is metabolic intermediate biosynthesis; chorismate biosynthesis; chorismate from D-erythrose 4-phosphate and phosphoenolpyruvate: step 6/7. The AROM polypeptide catalyzes 5 consecutive enzymatic reactions in prechorismate polyaromatic amino acid biosynthesis. The chain is Pentafunctional AROM polypeptide from Cryptococcus neoformans var. neoformans serotype D (strain B-3501A) (Filobasidiella neoformans).